The sequence spans 138 residues: Phosphoribosyl-AMP cyclohydrolase (138 aa).

Asp84 is a Mg(2+) binding site. Position 85 (Cys85) interacts with Zn(2+). The Mg(2+) site is built by Asp86 and Asp88. The Zn(2+) site is built by Cys102 and Cys109.

This sequence belongs to the PRA-CH family. As to quaternary structure, homodimer. Mg(2+) serves as cofactor. Requires Zn(2+) as cofactor.

It is found in the cytoplasm. The catalysed reaction is 1-(5-phospho-beta-D-ribosyl)-5'-AMP + H2O = 1-(5-phospho-beta-D-ribosyl)-5-[(5-phospho-beta-D-ribosylamino)methylideneamino]imidazole-4-carboxamide. Its pathway is amino-acid biosynthesis; L-histidine biosynthesis; L-histidine from 5-phospho-alpha-D-ribose 1-diphosphate: step 3/9. Catalyzes the hydrolysis of the adenine ring of phosphoribosyl-AMP. The polypeptide is Phosphoribosyl-AMP cyclohydrolase (Burkholderia cenocepacia (strain ATCC BAA-245 / DSM 16553 / LMG 16656 / NCTC 13227 / J2315 / CF5610) (Burkholderia cepacia (strain J2315))).